Here is a 646-residue protein sequence, read N- to C-terminus: Translation initiation factor IF-2 (646 aa).

One can recognise a tr-type G domain in the interval 146 to 315 (PRPPVVTVMG…LLVAEMEELR (170 aa)). The G1 stretch occupies residues 155 to 162 (GHVDHGKT). 155 to 162 (GHVDHGKT) provides a ligand contact to GTP. Residues 180–184 (GITQH) form a G2 region. The segment at 201–204 (DTPG) is G3. GTP is bound by residues 201-205 (DTPGH) and 255-258 (NKID). Residues 255–258 (NKID) form a G4 region. A G5 region spans residues 291-293 (SAK).

The protein belongs to the TRAFAC class translation factor GTPase superfamily. Classic translation factor GTPase family. IF-2 subfamily.

It is found in the cytoplasm. Functionally, one of the essential components for the initiation of protein synthesis. Protects formylmethionyl-tRNA from spontaneous hydrolysis and promotes its binding to the 30S ribosomal subunits. Also involved in the hydrolysis of GTP during the formation of the 70S ribosomal complex. This is Translation initiation factor IF-2 from Clostridioides difficile (strain 630) (Peptoclostridium difficile).